The chain runs to 195 residues: MHAITNSGWVEVITGSMFSGKTEELLRRLRRAEIAGQDVAAVTPAVDDRYGEATLGSHAGRSWAATVVEPTAEGVASIPTLLNGEQVVAIDEANFFPAELVDVCQELAADGRRVVLSGTDQTFRGEPFEPVPQLMAIAEYVDKMRAICMQCGEPATRNQRLIEGEPAHYDDPTVMVGAEETYEARCRNCHVVRRE.

ATP-binding positions include 15 to 22 (GSMFSGKT) and 91 to 94 (DEAN). E92 (proton acceptor) is an active-site residue. Zn(2+) contacts are provided by C148, C151, C186, and C189.

It belongs to the thymidine kinase family. In terms of assembly, homotetramer.

The protein resides in the cytoplasm. It catalyses the reaction thymidine + ATP = dTMP + ADP + H(+). This chain is Thymidine kinase, found in Halobacterium salinarum (strain ATCC 29341 / DSM 671 / R1).